The following is a 648-amino-acid chain: Macrolide export ATP-binding/permease protein MacB (648 aa).

One can recognise an ABC transporter domain in the interval 5–243; that stretch reads LELCNVSRSY…QGVDAAVVNT (239 aa). Residue 41–48 coordinates ATP; sequence GVSGSGKS. 5 consecutive transmembrane segments (helical) span residues 273–293, 417–437, 523–543, 577–597, and 611–631; these read LLTMLGIIIGIASVVSIVVVG, ANVVGEVVLAGNMPVIVIGVA, LFLTLVAVISLVVGGIGVMNI, VLVCLVGGALGISLSMFIAFM, and LTALASAFLCSTFTGILFGWL.

It belongs to the ABC transporter superfamily. Macrolide exporter (TC 3.A.1.122) family. In terms of assembly, homodimer. Part of the tripartite efflux system MacAB-TolC, which is composed of an inner membrane transporter, MacB, a periplasmic membrane fusion protein, MacA, and an outer membrane component, TolC. The complex forms a large protein conduit and can translocate molecules across both the inner and outer membranes. Interacts with MacA.

It is found in the cell inner membrane. In terms of biological role, part of the tripartite efflux system MacAB-TolC. MacB is a non-canonical ABC transporter that contains transmembrane domains (TMD), which form a pore in the inner membrane, and an ATP-binding domain (NBD), which is responsible for energy generation. Confers resistance against macrolides. The polypeptide is Macrolide export ATP-binding/permease protein MacB (Salmonella typhimurium (strain LT2 / SGSC1412 / ATCC 700720)).